We begin with the raw amino-acid sequence, 81 residues long: Conotoxin Im016 (81 aa).

A signal peptide spans 1-21 (MSTLGMMLLILLLLVPLATFA). Positions 22 to 31 (DDGPTMRGHR) are excised as a propeptide.

Belongs to the conotoxin N superfamily. Contains 5 disulfide bonds. Expressed by the venom duct.

It is found in the secreted. Probable neurotoxin. In Conus imperialis (Imperial cone), this protein is Conotoxin Im016.